The chain runs to 180 residues: Crossover junction endodeoxyribonuclease RuvC (180 aa).

Catalysis depends on residues Asp7, Glu66, and Asp138. Mg(2+)-binding residues include Asp7, Glu66, and Asp138.

Belongs to the RuvC family. In terms of assembly, homodimer which binds Holliday junction (HJ) DNA. The HJ becomes 2-fold symmetrical on binding to RuvC with unstacked arms; it has a different conformation from HJ DNA in complex with RuvA. In the full resolvosome a probable DNA-RuvA(4)-RuvB(12)-RuvC(2) complex forms which resolves the HJ. It depends on Mg(2+) as a cofactor.

The protein localises to the cytoplasm. The catalysed reaction is Endonucleolytic cleavage at a junction such as a reciprocal single-stranded crossover between two homologous DNA duplexes (Holliday junction).. In terms of biological role, the RuvA-RuvB-RuvC complex processes Holliday junction (HJ) DNA during genetic recombination and DNA repair. Endonuclease that resolves HJ intermediates. Cleaves cruciform DNA by making single-stranded nicks across the HJ at symmetrical positions within the homologous arms, yielding a 5'-phosphate and a 3'-hydroxyl group; requires a central core of homology in the junction. The consensus cleavage sequence is 5'-(A/T)TT(C/G)-3'. Cleavage occurs on the 3'-side of the TT dinucleotide at the point of strand exchange. HJ branch migration catalyzed by RuvA-RuvB allows RuvC to scan DNA until it finds its consensus sequence, where it cleaves and resolves the cruciform DNA. This chain is Crossover junction endodeoxyribonuclease RuvC, found in Burkholderia lata (strain ATCC 17760 / DSM 23089 / LMG 22485 / NCIMB 9086 / R18194 / 383).